Here is a 119-residue protein sequence, read N- to C-terminus: Basic phospholipase A2 DE-1 (119 aa).

Intrachain disulfides connect Cys-11-Cys-71, Cys-26-Cys-118, Cys-28-Cys-44, Cys-43-Cys-99, Cys-50-Cys-92, Cys-60-Cys-85, and Cys-78-Cys-90. The Ca(2+) site is built by Tyr-27, Gly-29, Gly-31, and Asp-48. Asp-93 is a catalytic residue.

Belongs to the phospholipase A2 family. Group I subfamily. D49 sub-subfamily. Ca(2+) is required as a cofactor. As to expression, expressed by the venom gland.

It is found in the secreted. The enzyme catalyses a 1,2-diacyl-sn-glycero-3-phosphocholine + H2O = a 1-acyl-sn-glycero-3-phosphocholine + a fatty acid + H(+). Functionally, PLA2 catalyzes the calcium-dependent hydrolysis of the 2-acyl groups in 3-sn-phosphoglycerides. The protein is Basic phospholipase A2 DE-1 of Hemachatus haemachatus (Rinkhals).